A 432-amino-acid polypeptide reads, in one-letter code: Histidine--tRNA ligase (432 aa).

The protein belongs to the class-II aminoacyl-tRNA synthetase family. In terms of assembly, homodimer.

It localises to the cytoplasm. It catalyses the reaction tRNA(His) + L-histidine + ATP = L-histidyl-tRNA(His) + AMP + diphosphate + H(+). The protein is Histidine--tRNA ligase of Symbiobacterium thermophilum (strain DSM 24528 / JCM 14929 / IAM 14863 / T).